A 429-amino-acid polypeptide reads, in one-letter code: Growth/differentiation factor 2 (429 aa).

The signal sequence occupies residues 1–22; it reads MCPGALWVALPLLSLLAGSLQG. A propeptide spanning residues 23–319 is cleaved from the precursor; it reads KPLQSWGRGS…AGSTLARRKR (297 aa). Asn-71 and Asn-136 each carry an N-linked (GlcNAc...) asparagine glycan. Over residues 283–301 the composition is skewed to basic and acidic residues; the sequence is VLKKLSKDGSTEAGESSHE. The disordered stretch occupies residues 283–308; it reads VLKKLSKDGSTEAGESSHEEDTDGHV. 3 cysteine pairs are disulfide-bonded: Cys-327–Cys-393, Cys-356–Cys-426, and Cys-360–Cys-428. The interval 402-416 is interaction with ENG; sequence SVLYKDDMGVPTLKY.

This sequence belongs to the TGF-beta family. In terms of assembly, homodimer; disulfide-linked. Detected in extracellular fluid as mature homodimer, and in complex with its propeptide. Interacts with ACVRL1, BMPR2 and ACVR2B with high affinity (in vitro). Identified in a complex with ACVRL1 and ACVR2B. Has ten times lower affinity for ACVR2A (in vitro). Interacts with ENG, forming a heterotetramer with a 2:2 stoichiometry. Can form a heteromeric complex with ENG and ACVRL1. Interacts with type I receptor ACVR1. Post-translationally, a reversible disulfide bond can be formed between the two subunits in the homodimer; this has no effect on GDF2 activity. Detected in blood plasma (at protein level).

It localises to the secreted. Functionally, potent circulating inhibitor of angiogenesis. Signals through the type I activin receptor ACVRL1 but not other Alks. Signaling through SMAD1 in endothelial cells requires TGF-beta coreceptor endoglin/ENG. The sequence is that of Growth/differentiation factor 2 (GDF2) from Homo sapiens (Human).